Reading from the N-terminus, the 637-residue chain is Sodium-dependent proline transporter (637 aa).

At 1 to 45 (MKKLQEAHLRKPVTPDLLMTPSDQGDVDLDVDFAADRGNWTGKLD) the chain is on the cytoplasmic side. A Phosphothreonine modification is found at Thr20. Ser22 carries the phosphoserine modification. 3 helical membrane-spanning segments follow: residues 46–66 (FLLS…FPYR), 74–93 (AFLV…LFFL), and 117–137 (GAGA…NMII). Residues 138 to 214 (AYVLFYLFAS…QGIGRPGEIR (77 aa)) lie on the Extracellular side of the membrane. Asn182 is a glycosylation site (N-linked (GlcNAc...) asparagine). 9 consecutive transmembrane segments (helical) span residues 215–233 (WNLC…LCIL), 242–259 (VVYF…MLLV), 295–312 (IFYS…FASY), 324–345 (FIVT…FSVL), 378–397 (LPLS…TLGL), 425–443 (VFSG…ILTT), 459–479 (SFGL…VYGI), 500–519 (ACWL…YSIV), and 538–556 (LGIL…GMLV). The Cytoplasmic segment spans residues 557 to 637 (AVLREEGSLW…IAEEEEESMM (81 aa)). Residues Ser573 and Ser582 each carry the phosphoserine modification. The residue at position 588 (Thr588) is a Phosphothreonine. Position 591 is a phosphotyrosine (Tyr591). A phosphoserine mark is found at Ser598 and Ser600.

The protein belongs to the sodium:neurotransmitter symporter (SNF) (TC 2.A.22) family. SLC6A7 subfamily. Expressed in subpopulations of putative glutamatergic pathways of rat brain.

The protein resides in the synaptic cell membrane. The catalysed reaction is L-proline(out) + chloride(out) + 2 Na(+)(out) = L-proline(in) + chloride(in) + 2 Na(+)(in). It carries out the reaction L-pipecolate(out) + chloride(out) + 2 Na(+)(out) = L-pipecolate(in) + chloride(in) + 2 Na(+)(in). Brain specific sodium (and chloride)-dependent proline transporter. Terminates the action of proline by its high affinity sodium-dependent reuptake into presynaptic terminals. The polypeptide is Sodium-dependent proline transporter (Slc6a7) (Rattus norvegicus (Rat)).